We begin with the raw amino-acid sequence, 90 residues long: Small ribosomal subunit protein bS16 (90 aa).

This sequence belongs to the bacterial ribosomal protein bS16 family.

The sequence is that of Small ribosomal subunit protein bS16 from Geobacillus sp. (strain WCH70).